The sequence spans 578 residues: Matrix metalloproteinase-17 (578 aa).

Disordered regions lie at residues 1-22 (MGRRPRGPGSPRGPGPPRPGPG) and 107-133 (PRCSLPDLPPGAQSRRKRQTPPPTKWS). Positions 1–39 (MGRRPRGPGSPRGPGPPRPGPGLPPLLLVLALAAHGGCA) are cleaved as a signal peptide. Positions 11–22 (PRGPGPPRPGPG) are enriched in pro residues. Residues 40 to 124 (APAPRAEDLS…PPGAQSRRKR (85 aa)) constitute a propeptide that is removed on maturation. The short motif at 107–114 (PRCSLPDL) is the Cysteine switch element. A Zn(2+)-binding site is contributed by Cys-109. Asn-136 carries an N-linked (GlcNAc...) asparagine glycan. Position 247 (His-247) interacts with Zn(2+). Glu-248 is a catalytic residue. 2 residues coordinate Zn(2+): His-251 and His-257. Residues 301 to 334 (PTAQLDTPEPEEPPLLPEPPNNRSSTPPQKDVPH) are disordered. Asn-322 carries N-linked (GlcNAc...) asparagine glycosylation. Hemopexin repeat units follow at residues 333 to 382 (PHRC…WRGL), 386 to 432 (LDSV…SLPP), 436 to 479 (DAVF…WRGV), and 480 to 527 (PSML…WLVC). A disulfide bridge links Cys-336 with Cys-527. Ser-558 carries GPI-anchor amidated serine lipidation. Positions 559–578 (DAHRLALPSLLLLTPLLWGL) are cleaved as a propeptide — removed in mature form.

Belongs to the peptidase M10A family. Zn(2+) serves as cofactor. Requires Ca(2+) as cofactor. Post-translationally, the precursor is cleaved by a furin endopeptidase. In terms of tissue distribution, expressed by monocytes and macrophages.

Its subcellular location is the cell membrane. It is found in the secreted. It localises to the extracellular space. The protein resides in the extracellular matrix. Endopeptidase that degrades various components of the extracellular matrix, such as fibrin. May be involved in the activation of membrane-bound precursors of growth factors or inflammatory mediators, such as tumor necrosis factor-alpha. May also be involved in tumoral process. Not obvious if able to proteolytically activate progelatinase A. Does not hydrolyze collagen types I, II, III, IV and V, gelatin, fibronectin, laminin, decorin nor alpha1-antitrypsin. This is Matrix metalloproteinase-17 (Mmp17) from Mus musculus (Mouse).